Reading from the N-terminus, the 1593-residue chain is Laminin subunit gamma-1 (1593 aa).

The first 19 residues, 1-19, serve as a signal peptide directing secretion; that stretch reads MSLFSCLLLWTLWAACSHG. The Laminin N-terminal domain maps to 30–269; sequence RPQRCMPEFV…AISDFAVGGR (240 aa). N-linked (GlcNAc...) asparagine glycosylation is found at asparagine 44 and asparagine 118. Disulfide bonds link cysteine 270/cysteine 279, cysteine 272/cysteine 289, cysteine 291/cysteine 300, cysteine 303/cysteine 323, cysteine 326/cysteine 335, cysteine 328/cysteine 351, cysteine 354/cysteine 363, cysteine 366/cysteine 379, cysteine 382/cysteine 394, cysteine 384/cysteine 400, cysteine 402/cysteine 411, cysteine 414/cysteine 426, cysteine 429/cysteine 440, cysteine 431/cysteine 447, cysteine 449/cysteine 458, and cysteine 461/cysteine 476. 4 consecutive Laminin EGF-like domains span residues 270-325, 326-381, 382-428, and 429-478; these read CKCN…ECLP, CNCN…RCLS, CGCN…GCRP, and CSCN…GCTP. Residues 505 to 673 enclose the Laminin IV type A domain; sequence RDDEGWKGKQ…PGTPARWVEK (169 aa). Residues asparagine 560, asparagine 634, and asparagine 654 are each glycosylated (N-linked (GlcNAc...) asparagine). Intrachain disulfides connect cysteine 708-cysteine 717, cysteine 710-cysteine 724, cysteine 726-cysteine 735, cysteine 738-cysteine 754, cysteine 757-cysteine 765, cysteine 759-cysteine 776, cysteine 779-cysteine 788, cysteine 791-cysteine 809, cysteine 812-cysteine 826, cysteine 814-cysteine 833, cysteine 836-cysteine 845, cysteine 848-cysteine 865, cysteine 868-cysteine 882, cysteine 870-cysteine 889, cysteine 891-cysteine 900, cysteine 903-cysteine 916, cysteine 919-cysteine 931, cysteine 921-cysteine 938, cysteine 940-cysteine 949, cysteine 952-cysteine 964, cysteine 967-cysteine 979, cysteine 969-cysteine 985, cysteine 987-cysteine 996, and cysteine 999-cysteine 1012. Laminin EGF-like domains are found at residues 708-756, 757-811, 812-867, 868-918, 919-966, and 967-1014; these read CNCN…DCKA, CPCP…ACRA, CSCN…KCKP, CKCS…GCER, CNCN…GCKP, and CDCD…GCQQ. Asparagine 1006, asparagine 1091, asparagine 1159, asparagine 1189, asparagine 1207, asparagine 1254, asparagine 1364, and asparagine 1379 each carry an N-linked (GlcNAc...) asparagine glycan. The segment at 1014 to 1593 is domain II and I; the sequence is QCPNCYSLVR…CFNTPSLERP (580 aa). Positions 1021–1580 form a coiled coil; sequence LVRDKVNQQR…ANLNDIKNTL (560 aa).

As to quaternary structure, laminin is a complex glycoprotein, consisting of three different polypeptide chains (alpha, beta, gamma), which are bound to each other by disulfide bonds into a cross-shaped molecule comprising one long and three short arms with globules at each end.

Its subcellular location is the secreted. The protein localises to the extracellular space. It localises to the extracellular matrix. It is found in the basement membrane. Functionally, binding to cells via a high affinity receptor, laminin is thought to mediate the attachment, migration and organization of cells into tissues during embryonic development by interacting with other extracellular matrix components. This chain is Laminin subunit gamma-1 (lamc1), found in Danio rerio (Zebrafish).